The sequence spans 155 residues: Deoxyuridine 5'-triphosphate nucleotidohydrolase (155 aa).

Substrate is bound by residues 74–76 (RSG), Asn-87, and 91–93 (TID).

This sequence belongs to the dUTPase family. Requires Mg(2+) as cofactor.

The enzyme catalyses dUTP + H2O = dUMP + diphosphate + H(+). It participates in pyrimidine metabolism; dUMP biosynthesis; dUMP from dCTP (dUTP route): step 2/2. In terms of biological role, this enzyme is involved in nucleotide metabolism: it produces dUMP, the immediate precursor of thymidine nucleotides and it decreases the intracellular concentration of dUTP so that uracil cannot be incorporated into DNA. This Dinoroseobacter shibae (strain DSM 16493 / NCIMB 14021 / DFL 12) protein is Deoxyuridine 5'-triphosphate nucleotidohydrolase.